The chain runs to 203 residues: Holliday junction branch migration complex subunit RuvA (203 aa).

The tract at residues 1–63 is domain I; sequence MIGKLSGRVD…EDHINLYGFL (63 aa). A domain II region spans residues 64-142; the sequence is SLEEKSFFNL…KISSSSAAIK (79 aa). Positions 143–149 are flexible linker; that stretch reads DSLNIKG. The tract at residues 150 to 203 is domain III; sequence ITPVASSEVIKALINMGFSRFEAQNAVQEIITKNPEISIDELIRTALKNRNSNF.

It belongs to the RuvA family. As to quaternary structure, homotetramer. Forms an RuvA(8)-RuvB(12)-Holliday junction (HJ) complex. HJ DNA is sandwiched between 2 RuvA tetramers; dsDNA enters through RuvA and exits via RuvB. An RuvB hexamer assembles on each DNA strand where it exits the tetramer. Each RuvB hexamer is contacted by two RuvA subunits (via domain III) on 2 adjacent RuvB subunits; this complex drives branch migration. In the full resolvosome a probable DNA-RuvA(4)-RuvB(12)-RuvC(2) complex forms which resolves the HJ.

Its subcellular location is the cytoplasm. Its function is as follows. The RuvA-RuvB-RuvC complex processes Holliday junction (HJ) DNA during genetic recombination and DNA repair, while the RuvA-RuvB complex plays an important role in the rescue of blocked DNA replication forks via replication fork reversal (RFR). RuvA specifically binds to HJ cruciform DNA, conferring on it an open structure. The RuvB hexamer acts as an ATP-dependent pump, pulling dsDNA into and through the RuvAB complex. HJ branch migration allows RuvC to scan DNA until it finds its consensus sequence, where it cleaves and resolves the cruciform DNA. The polypeptide is Holliday junction branch migration complex subunit RuvA (Rickettsia bellii (strain OSU 85-389)).